We begin with the raw amino-acid sequence, 101 residues long: Transcription and mRNA export factor SUS1 (101 aa).

The protein belongs to the ENY2 family. In terms of assembly, component of the nuclear pore complex (NPC)-associated TREX-2 complex (transcription and export complex 2), composed of at least SUS1, SAC3, THP1, SEM1, and CDC31. TREX-2 contains 2 SUS1 chains. The TREX-2 complex interacts with the nucleoporin NUP1. Component of the 1.8 MDa SAGA transcription coactivator-HAT complex. SAGA is built of 5 distinct domains with specialized functions. Within the SAGA complex, SUS1, SGF11, SGF73 and UBP8 form an additional subcomplex of SAGA called the DUB module (deubiquitination module). Interacts directly with THP1, SAC3, SGF11, and with the RNA polymerase II.

It is found in the nucleus. It localises to the nucleoplasm. The protein localises to the cytoplasm. The protein resides in the P-body. Functionally, involved in mRNA export coupled transcription activation by association with both the TREX-2 and the SAGA complexes. At the promoters, SAGA is required for recruitment of the basal transcription machinery. It influences RNA polymerase II transcriptional activity through different activities such as TBP interaction and promoter selectivity, interaction with transcription activators, and chromatin modification through histone acetylation and deubiquitination. Within the SAGA complex, participates in a subcomplex required for deubiquitination of H2B and for the maintenance of steady-state H3 methylation levels. The TREX-2 complex functions in docking export-competent ribonucleoprotein particles (mRNPs) to the nuclear entrance of the nuclear pore complex (nuclear basket). TREX-2 participates in mRNA export and accurate chromatin positioning in the nucleus by tethering genes to the nuclear periphery. May also be involved in cytoplasmic mRNA decay by interaction with components of P-bodies. The polypeptide is Transcription and mRNA export factor SUS1 (Debaryomyces hansenii (strain ATCC 36239 / CBS 767 / BCRC 21394 / JCM 1990 / NBRC 0083 / IGC 2968) (Yeast)).